The chain runs to 210 residues: Calcium-activated potassium channel subunit beta-4 (210 aa).

The Cytoplasmic portion of the chain corresponds to 1–19 (MAKLRVAYEYTEAEDKSIR). Residues 20–40 (LGLFLIISGVVSLFIFGFCWL) form a helical membrane-spanning segment. At 41-167 (SPALQDLQAT…DVLLHRTHDE (127 aa)) the chain is on the extracellular side. 2 N-linked (GlcNAc...) asparagine glycosylation sites follow: N53 and N90. The helical transmembrane segment at 168 to 188 (IVLLHCFLWPLVTFVVGVLIV) threads the bilayer. At 189–210 (VLTICAKSLAVKAEAMKKRKFS) the chain is on the cytoplasmic side.

Belongs to the KCNMB (TC 8.A.14.1) family. KCNMB4 subfamily. As to quaternary structure, interacts with KCNMA1 tetramer. There are probably 4 molecules of KCMNB4 per KCNMA1 tetramer. Interacts with FMR1 (via N-terminus). Phosphorylated. Phosphorylation modulates its effect on KCNMA1 activation kinetics. Post-translationally, N-glycosylated. A highly glycosylated form is promoted by KCNMA1. Glycosylation, which is not required for the interaction with KCNMA1 and subcellular location, increases protection against charybdotoxin. As to expression, predominantly expressed in brain. In brain, it is expressed in the cerebellum, cerebral cortex, medulla, spinal cord, occipital pole, frontal lobe, temporal lobe, putamen, amygdala, caudate nucleus, corpus callosum, hippocampus, substantia nigra and thalamus. Weakly or not expressed in other tissues.

The protein localises to the membrane. Regulatory subunit of the calcium activated potassium KCNMA1 (maxiK) channel. Modulates the calcium sensitivity and gating kinetics of KCNMA1, thereby contributing to KCNMA1 channel diversity. Decreases the gating kinetics and calcium sensitivity of the KCNMA1 channel, but with fast deactivation kinetics. May decrease KCNMA1 channel openings at low calcium concentrations but increases channel openings at high calcium concentrations. Makes KCNMA1 channel resistant to 100 nM charybdotoxin (CTX) toxin concentrations. The chain is Calcium-activated potassium channel subunit beta-4 (KCNMB4) from Homo sapiens (Human).